Reading from the N-terminus, the 200-residue chain is Putative 3-methyladenine DNA glycosylase (200 aa).

It belongs to the DNA glycosylase MPG family.

In Bradyrhizobium diazoefficiens (strain JCM 10833 / BCRC 13528 / IAM 13628 / NBRC 14792 / USDA 110), this protein is Putative 3-methyladenine DNA glycosylase.